Here is a 341-residue protein sequence, read N- to C-terminus: Ribosomal RNA small subunit methyltransferase H (341 aa).

S-adenosyl-L-methionine-binding positions include 47 to 49 (GGY), aspartate 64, phenylalanine 91, aspartate 109, and glutamine 116.

It belongs to the methyltransferase superfamily. RsmH family.

It is found in the cytoplasm. The catalysed reaction is cytidine(1402) in 16S rRNA + S-adenosyl-L-methionine = N(4)-methylcytidine(1402) in 16S rRNA + S-adenosyl-L-homocysteine + H(+). Functionally, specifically methylates the N4 position of cytidine in position 1402 (C1402) of 16S rRNA. The sequence is that of Ribosomal RNA small subunit methyltransferase H from Rhizobium rhizogenes (strain K84 / ATCC BAA-868) (Agrobacterium radiobacter).